The chain runs to 306 residues: Armadillo repeat-containing protein 10 (306 aa).

A helical transmembrane segment spans residues 7–29 (VGWVAAGLVLGAGACYCIYRLTR). Phosphoserine is present on S43. Phosphothreonine is present on T48. Residues 101-143 (GGIPIVGNKINSLNQSIKEKALNALNNLSVNVENQTKIKIYVP) form an ARM repeat.

Interacts with the DNA-binding domain of p53/TP53.

It is found in the endoplasmic reticulum membrane. It localises to the mitochondrion outer membrane. May play a role in cell survival and cell growth. May suppress the transcriptional activity of p53/TP53. The chain is Armadillo repeat-containing protein 10 (Armc10) from Mus musculus (Mouse).